The primary structure comprises 217 residues: 3,4-dihydroxy-2-butanone 4-phosphate synthase (217 aa).

D-ribulose 5-phosphate contacts are provided by residues 37-38, Asp42, 150-154, and Glu174; these read RE and RRGHT. Glu38 is a Mg(2+) binding site. Position 153 (His153) interacts with Mg(2+).

Belongs to the DHBP synthase family. Homodimer. Mg(2+) is required as a cofactor. Mn(2+) serves as cofactor.

It carries out the reaction D-ribulose 5-phosphate = (2S)-2-hydroxy-3-oxobutyl phosphate + formate + H(+). The protein operates within cofactor biosynthesis; riboflavin biosynthesis; 2-hydroxy-3-oxobutyl phosphate from D-ribulose 5-phosphate: step 1/1. Functionally, catalyzes the conversion of D-ribulose 5-phosphate to formate and 3,4-dihydroxy-2-butanone 4-phosphate. The sequence is that of 3,4-dihydroxy-2-butanone 4-phosphate synthase from Shewanella woodyi (strain ATCC 51908 / MS32).